A 596-amino-acid chain; its full sequence is Aspartate--tRNA(Asp/Asn) ligase (596 aa).

E172 provides a ligand contact to L-aspartate. Residues 196–199 (QLFK) are aspartate. R218 serves as a coordination point for L-aspartate. ATP-binding positions include 218 to 220 (RDE) and Q227. H455 is a binding site for L-aspartate. An ATP-binding site is contributed by E489. R496 provides a ligand contact to L-aspartate. 541 to 544 (GLDR) contributes to the ATP binding site.

Belongs to the class-II aminoacyl-tRNA synthetase family. Type 1 subfamily. As to quaternary structure, homodimer.

Its subcellular location is the cytoplasm. It catalyses the reaction tRNA(Asx) + L-aspartate + ATP = L-aspartyl-tRNA(Asx) + AMP + diphosphate. Aspartyl-tRNA synthetase with relaxed tRNA specificity since it is able to aspartylate not only its cognate tRNA(Asp) but also tRNA(Asn). Reaction proceeds in two steps: L-aspartate is first activated by ATP to form Asp-AMP and then transferred to the acceptor end of tRNA(Asp/Asn). This chain is Aspartate--tRNA(Asp/Asn) ligase, found in Bordetella avium (strain 197N).